We begin with the raw amino-acid sequence, 92 residues long: Co-chaperonin GroES (92 aa).

It belongs to the GroES chaperonin family. In terms of assembly, heptamer of 7 subunits arranged in a ring. Interacts with the chaperonin GroEL.

Its subcellular location is the cytoplasm. Together with the chaperonin GroEL, plays an essential role in assisting protein folding. The GroEL-GroES system forms a nano-cage that allows encapsulation of the non-native substrate proteins and provides a physical environment optimized to promote and accelerate protein folding. GroES binds to the apical surface of the GroEL ring, thereby capping the opening of the GroEL channel. This Thermotoga maritima (strain ATCC 43589 / DSM 3109 / JCM 10099 / NBRC 100826 / MSB8) protein is Co-chaperonin GroES.